The following is a 38-amino-acid chain: Cytochrome b6-f complex subunit 5 (38 aa).

The chain crosses the membrane as a helical span at residues 5-25; that stretch reads LLLGIVLGLIPITLAGLFVAA.

It belongs to the PetG family. The 4 large subunits of the cytochrome b6-f complex are cytochrome b6, subunit IV (17 kDa polypeptide, PetD), cytochrome f and the Rieske protein, while the 4 small subunits are PetG, PetL, PetM and PetN. The complex functions as a dimer.

It localises to the cellular thylakoid membrane. Component of the cytochrome b6-f complex, which mediates electron transfer between photosystem II (PSII) and photosystem I (PSI), cyclic electron flow around PSI, and state transitions. PetG is required for either the stability or assembly of the cytochrome b6-f complex. The protein is Cytochrome b6-f complex subunit 5 of Rippkaea orientalis (strain PCC 8801 / RF-1) (Cyanothece sp. (strain PCC 8801)).